The primary structure comprises 186 residues: Peptidyl-tRNA hydrolase (186 aa).

Residue Tyr13 participates in tRNA binding. Catalysis depends on His18, which acts as the Proton acceptor. TRNA contacts are provided by Tyr59, Asn61, and Asn107.

This sequence belongs to the PTH family. Monomer.

It localises to the cytoplasm. The enzyme catalyses an N-acyl-L-alpha-aminoacyl-tRNA + H2O = an N-acyl-L-amino acid + a tRNA + H(+). Functionally, hydrolyzes ribosome-free peptidyl-tRNAs (with 1 or more amino acids incorporated), which drop off the ribosome during protein synthesis, or as a result of ribosome stalling. Its function is as follows. Catalyzes the release of premature peptidyl moieties from peptidyl-tRNA molecules trapped in stalled 50S ribosomal subunits, and thus maintains levels of free tRNAs and 50S ribosomes. This Thermotoga petrophila (strain ATCC BAA-488 / DSM 13995 / JCM 10881 / RKU-1) protein is Peptidyl-tRNA hydrolase.